A 494-amino-acid chain; its full sequence is 2,3-bisphosphoglycerate-independent phosphoglycerate mutase (494 aa).

The Mn(2+) site is built by Asp12 and Ser62. Ser62 acts as the Phosphoserine intermediate in catalysis. Residues His121, 150-151, Arg181, Arg187, 252-255, and Lys317 contribute to the substrate site; these read RD and RSDR. Residues Asp384, His388, Asp425, His426, and His443 each contribute to the Mn(2+) site.

Belongs to the BPG-independent phosphoglycerate mutase family. As to quaternary structure, monomer. Requires Mn(2+) as cofactor.

It catalyses the reaction (2R)-2-phosphoglycerate = (2R)-3-phosphoglycerate. The protein operates within carbohydrate degradation; glycolysis; pyruvate from D-glyceraldehyde 3-phosphate: step 3/5. Catalyzes the interconversion of 2-phosphoglycerate and 3-phosphoglycerate. The polypeptide is 2,3-bisphosphoglycerate-independent phosphoglycerate mutase (Anaplasma marginale (strain St. Maries)).